Consider the following 393-residue polypeptide: S-adenosylmethionine synthase 2 (393 aa).

Residue Glu9 coordinates Mg(2+). His15 serves as a coordination point for ATP. Position 43 (Glu43) interacts with K(+). The L-methionine site is built by Glu56 and Gln99. Residues 167-169 (DGK), 235-238 (SGRF), Asp246, 252-253 (RK), Ala269, Lys273, and Lys277 contribute to the ATP site. Residue Asp246 participates in L-methionine binding. L-methionine is bound at residue Lys277.

The protein belongs to the AdoMet synthase family. As to quaternary structure, homotetramer. Mn(2+) serves as cofactor. Requires Mg(2+) as cofactor. The cofactor is Co(2+). It depends on K(+) as a cofactor.

It localises to the cytoplasm. It catalyses the reaction L-methionine + ATP + H2O = S-adenosyl-L-methionine + phosphate + diphosphate. It functions in the pathway amino-acid biosynthesis; S-adenosyl-L-methionine biosynthesis; S-adenosyl-L-methionine from L-methionine: step 1/1. Functionally, catalyzes the formation of S-adenosylmethionine from methionine and ATP. The reaction comprises two steps that are both catalyzed by the same enzyme: formation of S-adenosylmethionine (AdoMet) and triphosphate, and subsequent hydrolysis of the triphosphate. May be involved in the synthesis of betain in response to abiotic stress such as high salinity. This Beta vulgaris (Sugar beet) protein is S-adenosylmethionine synthase 2 (SAMS2).